The sequence spans 382 residues: GDP-mannose transporter (382 aa).

Topologically, residues 1–40 are cytoplasmic; that stretch reads MADDKKTNEYTIEMDKLDHGNKDFEAPAPAVRPRGPPVAQ. Residues 41-61 traverse the membrane as a helical segment; sequence LANNPILPVLAYCGSSILMTV. Over 62–71 the chain is Lumenal; that stretch reads MNKYVLSGRD. The helical transmembrane segment at 72 to 92 threads the bilayer; that stretch reads FNLNFFLLCVQSIVCIVAIQT. Residues 93–110 are Cytoplasmic-facing; the sequence is CKVSKLITYRDFNSDEAK. Residues 111-127 form a helical membrane-spanning segment; sequence KWFPITLLLIGMIYTGS. Over 128-134 the chain is Lumenal; it reads KALQYLS. The chain crosses the membrane as a helical span at residues 135-151; it reads IPVYTIFKNLTIILIAY. The Cytoplasmic portion of the chain corresponds to 152–160; it reads GEVLWFGGS. Residues 161-182 form a helical membrane-spanning segment; sequence VTGLTLFSFGLMVLSSIIAAWA. Residues 183–200 are Lumenal-facing; it reads DIKHAVESSGDATAKVST. A helical membrane pass occupies residues 201–221; it reads LNAGYIWMLINCLCTSSYVLG. At 222–233 the chain is on the cytoplasmic side; it reads MRKRIKLTNFKD. Residues 234-254 traverse the membrane as a helical segment; that stretch reads FDTMFYNNLLSIPVLLVLTFL. The Lumenal segment spans residues 255 to 274; the sequence is MEDWSSANIARNFPSTDRNG. A helical membrane pass occupies residues 275 to 295; that stretch reads ILFAMILSGLSSVFISYTSAW. Over 296–303 the chain is Cytoplasmic; that stretch reads CVRVTSST. Residues 304 to 324 traverse the membrane as a helical segment; sequence TYSMVGALNKLPIALSGLIFF. Residues 325-327 are Lumenal-facing; sequence DAP. The chain crosses the membrane as a helical span at residues 328–348; that stretch reads VTFPSVSAIVVGFISGIVYAV. Over 349-382 the chain is Cytoplasmic; that stretch reads AKIKQSAKPKTGVLPMSNPPVSASSQSMRDSLRS. Positions 358-382 are disordered; it reads KTGVLPMSNPPVSASSQSMRDSLRS. Residues 367-382 show a composition bias toward polar residues; that stretch reads PPVSASSQSMRDSLRS.

This sequence belongs to the TPT transporter family. SLC35D subfamily. As to quaternary structure, homooligomer.

Its subcellular location is the golgi apparatus membrane. It is found in the cytoplasmic vesicle membrane. It localises to the endoplasmic reticulum membrane. Its function is as follows. Involved in the import of GDP-mannose from the cytoplasm into the Golgi lumen. The polypeptide is GDP-mannose transporter (gmt1) (Aspergillus fumigatus (strain CBS 144.89 / FGSC A1163 / CEA10) (Neosartorya fumigata)).